A 265-amino-acid chain; its full sequence is 3-methyl-2-oxobutanoate hydroxymethyltransferase (265 aa).

Mg(2+) contacts are provided by D45 and D84. 3-methyl-2-oxobutanoate contacts are provided by residues 45–46, D84, and K112; that span reads DS. Residue E114 participates in Mg(2+) binding. E181 acts as the Proton acceptor in catalysis.

The protein belongs to the PanB family. As to quaternary structure, homodecamer; pentamer of dimers. Mg(2+) is required as a cofactor.

The protein localises to the cytoplasm. The enzyme catalyses 3-methyl-2-oxobutanoate + (6R)-5,10-methylene-5,6,7,8-tetrahydrofolate + H2O = 2-dehydropantoate + (6S)-5,6,7,8-tetrahydrofolate. The protein operates within cofactor biosynthesis; (R)-pantothenate biosynthesis; (R)-pantoate from 3-methyl-2-oxobutanoate: step 1/2. Catalyzes the reversible reaction in which hydroxymethyl group from 5,10-methylenetetrahydrofolate is transferred onto alpha-ketoisovalerate to form ketopantoate. The chain is 3-methyl-2-oxobutanoate hydroxymethyltransferase from Pectobacterium carotovorum subsp. carotovorum (strain PC1).